We begin with the raw amino-acid sequence, 623 residues long: Glutathione import ATP-binding protein GsiA (623 aa).

ABC transporter domains are found at residues 15–269 (VENL…RALL) and 314–564 (LRVR…RKLL). Residues 49–56 (GESGSGKS) and 357–364 (GESGSGKS) each bind ATP.

It belongs to the ABC transporter superfamily. Glutathione importer (TC 3.A.1.5.11) family. In terms of assembly, the complex is composed of two ATP-binding proteins (GsiA), two transmembrane proteins (GsiC and GsiD) and a solute-binding protein (GsiB).

The protein resides in the cell inner membrane. It catalyses the reaction glutathione(out) + ATP + H2O = glutathione(in) + ADP + phosphate + H(+). Its function is as follows. Part of the ABC transporter complex GsiABCD involved in glutathione import. Responsible for energy coupling to the transport system. This is Glutathione import ATP-binding protein GsiA from Shigella flexneri.